A 433-amino-acid chain; its full sequence is MNVKIDGRRKINSNVIVPPDKSISHRSIMIGSLANGVTEIENFLFSDDCLATINCFKNLSTDIEIRNDKIIVKGNGFALSAPKQILDCQNSGTTTRLLLGILSTQEFESILTGDSSLKKRPMKRVTVPLSQMGAEFEFLEKEDFLPIKVKGSKKLKPIEYTLPIPSAQVKSALIFASLKAEGKSVIKESPKSRDHTELMLKHAGANIKSWEKDGVYTVEILPSQISSIKIKIPSDISSAAFFIVLALICEGSSVVIENCILNPTRTGIIDVLKQMGAEIKIEDVENRNGELVGKIVARSSNLRGVKVEKNDIPRIIDEIPILAVAAAFAEGKTIIDHASELRVKESDRIKTTVEMLKSFGAECYELENGLEIIGSREKLKSAVVNSYKDHRIAMAASIMACAVEGESTILDADCVSISFPNFYDILFSSTKKI.

The 3-phosphoshikimate site is built by Lys-21, Ser-22, and Arg-26. Residue Lys-21 coordinates phosphoenolpyruvate. Residues Gly-92 and Arg-120 each contribute to the phosphoenolpyruvate site. Positions 166, 168, 317, and 344 each coordinate 3-phosphoshikimate. A phosphoenolpyruvate-binding site is contributed by Gln-168. Asp-317 (proton acceptor) is an active-site residue. Residues Arg-348 and Arg-391 each contribute to the phosphoenolpyruvate site.

This sequence belongs to the EPSP synthase family. As to quaternary structure, monomer.

The protein resides in the cytoplasm. The catalysed reaction is 3-phosphoshikimate + phosphoenolpyruvate = 5-O-(1-carboxyvinyl)-3-phosphoshikimate + phosphate. It functions in the pathway metabolic intermediate biosynthesis; chorismate biosynthesis; chorismate from D-erythrose 4-phosphate and phosphoenolpyruvate: step 6/7. Catalyzes the transfer of the enolpyruvyl moiety of phosphoenolpyruvate (PEP) to the 5-hydroxyl of shikimate-3-phosphate (S3P) to produce enolpyruvyl shikimate-3-phosphate and inorganic phosphate. This Caldicellulosiruptor bescii (strain ATCC BAA-1888 / DSM 6725 / KCTC 15123 / Z-1320) (Anaerocellum thermophilum) protein is 3-phosphoshikimate 1-carboxyvinyltransferase.